Consider the following 395-residue polypeptide: Phosphonoacetaldehyde reductase (395 aa).

3 residues coordinate Fe cation: D199, H268, and H282.

The protein belongs to the iron-containing alcohol dehydrogenase family. Fe cation serves as cofactor.

The enzyme catalyses 2-hydroxyethylphosphonate + NAD(+) = phosphonoacetaldehyde + NADH + H(+). The protein operates within secondary metabolite biosynthesis; bialaphos biosynthesis. Catalyzes the reduction of phosphonoacetaldehyde to 2-hydroxyethylphosphonate, a step in the biosynthesis of phosphinothricin tripeptide. Phosphinothricin tripeptide (PTT), also known as bialaphos (BA), is a natural-product antibiotic and potent herbicide. Can use both NAD and NADP but the preferred substrate is NAD. This is Phosphonoacetaldehyde reductase (phpC) from Streptomyces viridochromogenes (strain DSM 40736 / JCM 4977 / BCRC 1201 / Tue 494).